We begin with the raw amino-acid sequence, 598 residues long: MNAVTIVIASMCILAIAYRLYGTFMMVKVLKVNDDKPTPAHALEDGKDYVPTNKWVSFGHHFAAIAAAGPLVGPILAAQFGYLPGLLWLLIGAVIGGAVHDIVVLFASMRKNGKSLSEVAKDELGPVAGFCTGLSMLFIITITMAGLSMVVLHALERNPWGTFAVGITIPIAMGVGLFYKKTGNLKLASTVGFLFLMAGVFIGPWVQTTALGDFLTLDTKTLAIALPVYAFFAAALPVWLLLAPRDYLSSFMKIGVFIALIVGVFVVNPSIPFPAFTEFVKGGGPVLAGPVWPFISITIACGAISGFHAFVGSGTTPKMLNKWSDMKPVAFGAMLVECLVGIMALIAATALQPADYFAINSTPEVFRTLGMNVVHLPELSGEIGLDLEGRTGGAVTLAVGMTYIFTGMPFFSHLASYFFQFVIMFEAVFILTAIDAGTRVARYLIQDFFGEVYKPLKKTDWIPGSVFASALACLMWGYLLYSGDIGSIWALFGVSNQLMASVGLIIGATIVLKIADKRRYILTCLIPLAYLYVTVNYAGYWMVRNVYLNPEAAGYSVLNGVLSIIMLVLGFIIIVAAVKKWAQMWKDPSLRMEASIPG.

A run of 16 helical transmembrane segments spans residues 6–26, 62–82, 86–106, 132–152, 159–179, 191–211, 222–242, 254–274, 291–311, 328–348, 391–411, 414–434, 461–481, 488–508, 521–541, and 557–577; these read IVIASMCILAIAYRLYGTFMM, FAAIAAAGPLVGPILAAQFGY, LLWLLIGAVIGGAVHDIVVLF, TGLSMLFIITITMAGLSMVVL, PWGTFAVGITIPIAMGVGLFY, VGFLFLMAGVFIGPWVQTTAL, LAIALPVYAFFAAALPVWLLL, IGVFIALIVGVFVVNPSIPFP, VWPFISITIACGAISGFHAFV, PVAFGAMLVECLVGIMALIAA, TGGAVTLAVGMTYIFTGMPFF, LASYFFQFVIMFEAVFILTAI, WIPGSVFASALACLMWGYLLY, IWALFGVSNQLMASVGLIIGA, ILTCLIPLAYLYVTVNYAGYW, and VLNGVLSIIMLVLGFIIIVAA.

The protein belongs to the peptide transporter carbon starvation (CstA) (TC 2.A.114) family.

It is found in the cell membrane. In terms of biological role, involved in peptide utilization. The protein is Peptide transporter CstA (cstA) of Bacillus subtilis (strain 168).